Consider the following 58-residue polypeptide: UPF0339 protein MA_3316 (58 aa).

It belongs to the UPF0339 family.

The chain is UPF0339 protein MA_3316 from Methanosarcina acetivorans (strain ATCC 35395 / DSM 2834 / JCM 12185 / C2A).